The sequence spans 345 residues: Protein RecA (345 aa).

ATP is bound at residue 81 to 88 (GPESSGKT).

The protein belongs to the RecA family.

The protein resides in the cytoplasm. Functionally, can catalyze the hydrolysis of ATP in the presence of single-stranded DNA, the ATP-dependent uptake of single-stranded DNA by duplex DNA, and the ATP-dependent hybridization of homologous single-stranded DNAs. It interacts with LexA causing its activation and leading to its autocatalytic cleavage. This is Protein RecA from Mycoplasma mycoides.